We begin with the raw amino-acid sequence, 425 residues long: Serine--tRNA ligase (425 aa).

231 to 233 (TAE) is an L-serine binding site. Residue 262–264 (RSE) coordinates ATP. Residue glutamate 285 participates in L-serine binding. ATP is bound at residue 349–352 (EISS). Serine 385 serves as a coordination point for L-serine.

It belongs to the class-II aminoacyl-tRNA synthetase family. Type-1 seryl-tRNA synthetase subfamily. Homodimer. The tRNA molecule binds across the dimer.

The protein localises to the cytoplasm. The enzyme catalyses tRNA(Ser) + L-serine + ATP = L-seryl-tRNA(Ser) + AMP + diphosphate + H(+). It carries out the reaction tRNA(Sec) + L-serine + ATP = L-seryl-tRNA(Sec) + AMP + diphosphate + H(+). It functions in the pathway aminoacyl-tRNA biosynthesis; selenocysteinyl-tRNA(Sec) biosynthesis; L-seryl-tRNA(Sec) from L-serine and tRNA(Sec): step 1/1. In terms of biological role, catalyzes the attachment of serine to tRNA(Ser). Is also able to aminoacylate tRNA(Sec) with serine, to form the misacylated tRNA L-seryl-tRNA(Sec), which will be further converted into selenocysteinyl-tRNA(Sec). The polypeptide is Serine--tRNA ligase (Maricaulis maris (strain MCS10) (Caulobacter maris)).